The primary structure comprises 254 residues: 3-oxo-5-alpha-steroid 4-dehydrogenase 2 (254 aa).

The next 4 helical transmembrane spans lie at 8-28 (VPVL…LCFG), 72-92 (PRSL…AHYF), 146-166 (FSVG…SDCM), and 206-226 (LATW…FLGM).

The protein belongs to the steroid 5-alpha reductase family.

Its subcellular location is the microsome membrane. The protein resides in the endoplasmic reticulum membrane. The catalysed reaction is a 3-oxo-5alpha-steroid + NADP(+) = a 3-oxo-Delta(4)-steroid + NADPH + H(+). The enzyme catalyses 17beta-hydroxy-5alpha-androstan-3-one + NADP(+) = testosterone + NADPH + H(+). It carries out the reaction 5alpha-pregnane-3,20-dione + NADP(+) = progesterone + NADPH + H(+). Its function is as follows. Converts testosterone (T) into 5-alpha-dihydrotestosterone (DHT) and progesterone or corticosterone into their corresponding 5-alpha-3-oxosteroids. It plays a central role in sexual differentiation and androgen physiology. The polypeptide is 3-oxo-5-alpha-steroid 4-dehydrogenase 2 (Srd5a2) (Mus musculus (Mouse)).